Here is a 299-residue protein sequence, read N- to C-terminus: Phosphate import ATP-binding protein PstB 1 (299 aa).

The interval 1–51 (MTENEMTSNDSTEPTPTTETAASSPDPSGDPLIEQSIDVEGTDSTAAETGK) is disordered. Positions 10–27 (DSTEPTPTTETAASSPDP) are enriched in low complexity. The ABC transporter domain maps to 54–294 (IESSDLNVFY…PESQRVEDYI (241 aa)). 86–93 (GPSGCGKS) provides a ligand contact to ATP.

The protein belongs to the ABC transporter superfamily. Phosphate importer (TC 3.A.1.7) family. In terms of assembly, the complex is composed of two ATP-binding proteins (PstB), two transmembrane proteins (PstC and PstA) and a solute-binding protein (PstS).

The protein localises to the cell membrane. It carries out the reaction phosphate(out) + ATP + H2O = ADP + 2 phosphate(in) + H(+). Its function is as follows. Part of the ABC transporter complex PstSACB involved in phosphate import. Responsible for energy coupling to the transport system. The protein is Phosphate import ATP-binding protein PstB 1 of Haloarcula marismortui (strain ATCC 43049 / DSM 3752 / JCM 8966 / VKM B-1809) (Halobacterium marismortui).